We begin with the raw amino-acid sequence, 96 residues long: Acylphosphatase (96 aa).

One can recognise an Acylphosphatase-like domain in the interval 4 to 96; the sequence is RCEFLIFGKV…ESLNDFEILR (93 aa). Residues Arg19 and Asn42 contribute to the active site.

The protein belongs to the acylphosphatase family.

The enzyme catalyses an acyl phosphate + H2O = a carboxylate + phosphate + H(+). The protein is Acylphosphatase (acyP) of Helicobacter hepaticus (strain ATCC 51449 / 3B1).